Here is a 298-residue protein sequence, read N- to C-terminus: Zinc import ATP-binding protein ZnuC (298 aa).

One can recognise an ABC transporter domain in the interval 17–232 (IELRNAGVYR…PEYVRLFGSR (216 aa)). Residue 49 to 56 (GPNGAGKS) participates in ATP binding. Residues 273–298 (RGHCHVEDGHHHDHEHHHHEGGQPRA) are disordered. Residues 276–298 (CHVEDGHHHDHEHHHHEGGQPRA) are compositionally biased toward basic and acidic residues.

This sequence belongs to the ABC transporter superfamily. Zinc importer (TC 3.A.1.15.5) family. As to quaternary structure, the complex is composed of two ATP-binding proteins (ZnuC), two transmembrane proteins (ZnuB) and a solute-binding protein (ZnuA).

It localises to the cell inner membrane. It catalyses the reaction Zn(2+)(out) + ATP(in) + H2O(in) = Zn(2+)(in) + ADP(in) + phosphate(in) + H(+)(in). Part of the ABC transporter complex ZnuABC involved in zinc import. Responsible for energy coupling to the transport system. This chain is Zinc import ATP-binding protein ZnuC, found in Brucella abortus (strain 2308).